The primary structure comprises 883 residues: MNEQYSALRSNVSMLGKVLGETIKDALGEHILDRVETIRKLSKSSRAGNEANRQELLTTLQNLSNDELLPVARAFSQFLNLANTAEQYHSISPKGEAASNPEVIARTLRKLKNQPDLNDATIKKAVESLSLELVLTAHPTEITRRTLIHKMGEINNCLKQLDNTDIADYERHQVMRRLRQLIAQSWHTDEIRKQRPSPVDEAKWGFAVVENSLWQGVPNYLRELNEQLEENLGYKLTVDFVPVRFTSWMGGDRDGNPNVTADITRHVLLLSRWKATDLFLKDIHILVSELSMVDATPELLALVGEEGASEPYRYLMKKLRARLMATQSWLEARLKGEKLPKPAGLLTQNEQLWEPLYACYQSLQACGMGIIANGELLDTLRRVKCFGVPLVRIDIRQESTRHTEALGEITRYLGIGDYESWSEADKQAFLIRELNSKRPLLPRNWEPSNDTREVLETCKVIAEAPKGSIAAYVISMAKTPSDVLAVHLLLKEAGIGFAMPVAPLFETLDDLNNADDVMTQLLNIDWYRGLIQGKQMVMIGYSDSAKDAGVMAASWAQYQAQDALIKTCEKAGIELTLFHGRGGSIGRGGAPAHAALLSQPPGSLKGGLRVTEQGEMIRFKYGLPEVTVSSLSLYTSAILEANLLPPPEPKDSWRHIMDELSVISCETYRGYVRENKDFVPYFRSATPEQELGKLPLGSRPAKRRPTGGVESLRAIPWIFAWTQNRLMLPAWLGAGTALQKVVEDGKQSELEAMCRDWPFFSTRLGMLEMVFSKADLWLADYYDQRLVAKTLWPLGKELRDLLEEDIKVVLAIANDSHLMADLPWIAESIQLRNVYTDPLNVLQAELLYRSRLTEEQGKSPDPRVEQALMVTIAGVAAGMRNTG.

Catalysis depends on residues His138 and Lys546.

Belongs to the PEPCase type 1 family. Mg(2+) serves as cofactor.

The catalysed reaction is oxaloacetate + phosphate = phosphoenolpyruvate + hydrogencarbonate. In terms of biological role, forms oxaloacetate, a four-carbon dicarboxylic acid source for the tricarboxylic acid cycle. The protein is Phosphoenolpyruvate carboxylase of Salmonella gallinarum (strain 287/91 / NCTC 13346).